Consider the following 255-residue polypeptide: Pyridoxine 5'-phosphate synthase (255 aa).

Positions 8 and 19 each coordinate 3-amino-2-oxopropyl phosphate. The Proton acceptor role is filled by His44. Residues Arg46 and His51 each contribute to the 1-deoxy-D-xylulose 5-phosphate site. The active-site Proton acceptor is the Glu74. Thr111 provides a ligand contact to 1-deoxy-D-xylulose 5-phosphate. His202 (proton donor) is an active-site residue. Residues Asp203 and 225–226 (GH) each bind 3-amino-2-oxopropyl phosphate.

Belongs to the PNP synthase family. In terms of assembly, homooctamer; tetramer of dimers.

The protein resides in the cytoplasm. The catalysed reaction is 3-amino-2-oxopropyl phosphate + 1-deoxy-D-xylulose 5-phosphate = pyridoxine 5'-phosphate + phosphate + 2 H2O + H(+). It functions in the pathway cofactor biosynthesis; pyridoxine 5'-phosphate biosynthesis; pyridoxine 5'-phosphate from D-erythrose 4-phosphate: step 5/5. Its function is as follows. Catalyzes the complicated ring closure reaction between the two acyclic compounds 1-deoxy-D-xylulose-5-phosphate (DXP) and 3-amino-2-oxopropyl phosphate (1-amino-acetone-3-phosphate or AAP) to form pyridoxine 5'-phosphate (PNP) and inorganic phosphate. In Xanthomonas oryzae pv. oryzae (strain MAFF 311018), this protein is Pyridoxine 5'-phosphate synthase.